A 949-amino-acid chain; its full sequence is ATPase 6, plasma membrane-type (949 aa).

Residues 1–64 (MAADISWDEI…EKVENKFLKF (64 aa)) lie on the Cytoplasmic side of the membrane. The chain crosses the membrane as a helical span at residues 65–84 (LGFMWNPLSWVMEAAAIMAI). The Extracellular segment spans residues 85 to 96 (VLANGGGRPPDW). Residues 97–117 (QDFVGITCLLIINSTISFIEE) form a helical membrane-spanning segment. At 118–246 (NNAGNAAAAL…GHFQKVLTAI (129 aa)) the chain is on the cytoplasmic side. The helical transmembrane segment at 247-267 (GNFCICSIGIGMLIEIIIMYP) threads the bilayer. Over 268–276 (IQHRKYRDG) the chain is Extracellular. Residues 277–294 (IDNLLVLLIGGIPIAMPT) form a helical membrane-spanning segment. The Cytoplasmic segment spans residues 295-645 (VLSVTMAIGS…TSRAIFQRMK (351 aa)). D332 functions as the 4-aspartylphosphate intermediate in the catalytic mechanism. Mg(2+) is bound by residues D590 and D594. Residues 646 to 667 (NYTIYAVSITIRIVLGFMLVAL) traverse the membrane as a helical segment. Over 668-672 (IWEFD) the chain is Extracellular. Residues 673-695 (FSPFMVLIIAILNDGTIMTISKD) traverse the membrane as a helical segment. Residues 696–711 (RVKPSPIPDSWKLKEI) lie on the Cytoplasmic side of the membrane. A helical transmembrane segment spans residues 712-732 (FATGVVLGTYMALVTVVFFWL). Residues 733–753 (AHDTTFFSDKFGVRSLQGKDE) lie on the Extracellular side of the membrane. A helical membrane pass occupies residues 754–774 (ELIAVLYLQVSIISQALIFVT). Residues 775 to 786 (RSRSWSFVERPG) are Cytoplasmic-facing. The helical transmembrane segment at 787 to 807 (LLLLIAFFVAQLIATLIATYA) threads the bilayer. Residues 808 to 815 (HWEFARIK) are Extracellular-facing. Residues 816–836 (GCGWGWCGVIWIYSIVTYIPL) form a helical membrane-spanning segment. The Cytoplasmic segment spans residues 837 to 949 (DILKFITRYT…IDNLNQHYTV (113 aa)). T883 is modified (phosphothreonine). The residue at position 931 (S931) is a Phosphoserine. Residues 947-949 (YTV) are interaction with 14-3-3 proteins. The residue at position 948 (T948) is a Phosphothreonine.

The protein belongs to the cation transport ATPase (P-type) (TC 3.A.3) family. Type IIIA subfamily. As to quaternary structure, binds to 14-3-3 proteins. The binding is induced by phosphorylation of Thr-948. Binding to 14-3-3 proteins activates the H(+)-ATPase. In terms of tissue distribution, expressed in guard cells.

The protein localises to the membrane. The catalysed reaction is ATP + H2O + H(+)(in) = ADP + phosphate + 2 H(+)(out). Functionally, the plasma membrane H(+) ATPase of plants and fungi generates a proton gradient that drives the active transport of nutrients by H(+)-symport. The resulting external acidification and/or internal alkinization may mediate growth responses. The polypeptide is ATPase 6, plasma membrane-type (AHA6) (Arabidopsis thaliana (Mouse-ear cress)).